The primary structure comprises 184 residues: uncharacterized protein (184 aa).

This is an uncharacterized protein from Chlamydia pneumoniae (Chlamydophila pneumoniae).